A 726-amino-acid polypeptide reads, in one-letter code: 1,4-alpha-glucan branching enzyme GlgB (726 aa).

The active-site Nucleophile is aspartate 407. Residue glutamate 460 is the Proton donor of the active site.

The protein belongs to the glycosyl hydrolase 13 family. GlgB subfamily. Monomer.

The catalysed reaction is Transfers a segment of a (1-&gt;4)-alpha-D-glucan chain to a primary hydroxy group in a similar glucan chain.. Its pathway is glycan biosynthesis; glycogen biosynthesis. Catalyzes the formation of the alpha-1,6-glucosidic linkages in glycogen by scission of a 1,4-alpha-linked oligosaccharide from growing alpha-1,4-glucan chains and the subsequent attachment of the oligosaccharide to the alpha-1,6 position. This is 1,4-alpha-glucan branching enzyme GlgB from Hydrogenovibrio crunogenus (strain DSM 25203 / XCL-2) (Thiomicrospira crunogena).